A 190-amino-acid chain; its full sequence is MAKEKKEEVKEEEVSEATSTEGSTDVESTNNDDLTTETQATTALDDIKKVEAERDELSDKYIRAQAEIVNMRRRNEKEQASLIKYDGQKLAKAILPALDNLERALAVESASEQLLKGVKMVQTDLLKALKENHVAEIEAEGQAFDPNMHQAVQTVPADDDHPADTVVQVLQKGYILKDRVLRPAMVIVAQ.

Residues 1–40 (MAKEKKEEVKEEEVSEATSTEGSTDVESTNNDDLTTETQA) are disordered. Over residues 22-40 (GSTDVESTNNDDLTTETQA) the composition is skewed to polar residues.

The protein belongs to the GrpE family. As to quaternary structure, homodimer.

It localises to the cytoplasm. Functionally, participates actively in the response to hyperosmotic and heat shock by preventing the aggregation of stress-denatured proteins, in association with DnaK and GrpE. It is the nucleotide exchange factor for DnaK and may function as a thermosensor. Unfolded proteins bind initially to DnaJ; upon interaction with the DnaJ-bound protein, DnaK hydrolyzes its bound ATP, resulting in the formation of a stable complex. GrpE releases ADP from DnaK; ATP binding to DnaK triggers the release of the substrate protein, thus completing the reaction cycle. Several rounds of ATP-dependent interactions between DnaJ, DnaK and GrpE are required for fully efficient folding. This is Protein GrpE from Pediococcus pentosaceus (strain ATCC 25745 / CCUG 21536 / LMG 10740 / 183-1w).